The primary structure comprises 420 residues: Putative zinc metalloprotease Lmo1318 (420 aa).

Zn(2+) is bound at residue histidine 18. The active site involves glutamate 19. Histidine 22 provides a ligand contact to Zn(2+). The next 4 helical transmembrane spans lie at 172–194 (TIFA…LAFV), 304–326 (NWIV…LDML), 347–369 (VLNW…LPAL), and 393–412 (GIIH…LVTW). The region spanning 176 to 267 (GPLFNFILAI…DGKTQDIDVK (92 aa)) is the PDZ domain.

Belongs to the peptidase M50B family. The cofactor is Zn(2+).

The protein resides in the cell membrane. The sequence is that of Putative zinc metalloprotease Lmo1318 from Listeria monocytogenes serovar 1/2a (strain ATCC BAA-679 / EGD-e).